Consider the following 109-residue polypeptide: Globin (109 aa).

The Globin domain occupies 3 to 109; it reads PLTAAEVSSL…IFPIAGIHAL (107 aa).

The protein belongs to the globin family. In terms of assembly, monomer.

In terms of biological role, oxygen binding protein. The polypeptide is Globin (Dicrocoelium dendriticum (Small liver fluke)).